Consider the following 104-residue polypeptide: Large ribosomal subunit protein uL24 (104 aa).

Belongs to the universal ribosomal protein uL24 family. In terms of assembly, part of the 50S ribosomal subunit.

Functionally, one of two assembly initiator proteins, it binds directly to the 5'-end of the 23S rRNA, where it nucleates assembly of the 50S subunit. In terms of biological role, one of the proteins that surrounds the polypeptide exit tunnel on the outside of the subunit. This Pectobacterium carotovorum subsp. carotovorum (strain PC1) protein is Large ribosomal subunit protein uL24.